We begin with the raw amino-acid sequence, 202 residues long: Small ribosomal subunit protein uS4c (202 aa).

The S4 RNA-binding domain maps to 90-153 (MRLDNVTFRL…KSETIISKNI (64 aa)).

The protein belongs to the universal ribosomal protein uS4 family. Part of the 30S ribosomal subunit. Contacts protein S5. The interaction surface between S4 and S5 is involved in control of translational fidelity.

The protein resides in the plastid. It localises to the chloroplast. Functionally, one of the primary rRNA binding proteins, it binds directly to 16S rRNA where it nucleates assembly of the body of the 30S subunit. With S5 and S12 plays an important role in translational accuracy. The polypeptide is Small ribosomal subunit protein uS4c (rps4) (Hypnum cupressiforme (Cypress-leaved plait-moss)).